A 96-amino-acid chain; its full sequence is YcgL domain-containing protein VS_0884 (96 aa).

Residues Met-1–Lys-84 enclose the YcgL domain.

In Vibrio atlanticus (strain LGP32) (Vibrio splendidus (strain Mel32)), this protein is YcgL domain-containing protein VS_0884.